The chain runs to 373 residues: Dual-specificity RNA methyltransferase RlmN (373 aa).

Glu94 serves as the catalytic Proton acceptor. Residues 100 to 339 form the Radical SAM core domain; it reads EDDRATLCVS…VIVRKTRGDD (240 aa). Cysteines 107 and 344 form a disulfide. Cys114, Cys118, and Cys121 together coordinate [4Fe-4S] cluster. Residues 168–169, Ser200, 222–224, and Asn301 contribute to the S-adenosyl-L-methionine site; these read GE and SIH. Residue Cys344 is the S-methylcysteine intermediate of the active site.

This sequence belongs to the radical SAM superfamily. RlmN family. The cofactor is [4Fe-4S] cluster.

Its subcellular location is the cytoplasm. The enzyme catalyses adenosine(2503) in 23S rRNA + 2 reduced [2Fe-2S]-[ferredoxin] + 2 S-adenosyl-L-methionine = 2-methyladenosine(2503) in 23S rRNA + 5'-deoxyadenosine + L-methionine + 2 oxidized [2Fe-2S]-[ferredoxin] + S-adenosyl-L-homocysteine. It carries out the reaction adenosine(37) in tRNA + 2 reduced [2Fe-2S]-[ferredoxin] + 2 S-adenosyl-L-methionine = 2-methyladenosine(37) in tRNA + 5'-deoxyadenosine + L-methionine + 2 oxidized [2Fe-2S]-[ferredoxin] + S-adenosyl-L-homocysteine. In terms of biological role, specifically methylates position 2 of adenine 2503 in 23S rRNA and position 2 of adenine 37 in tRNAs. m2A2503 modification seems to play a crucial role in the proofreading step occurring at the peptidyl transferase center and thus would serve to optimize ribosomal fidelity. The sequence is that of Dual-specificity RNA methyltransferase RlmN from Shewanella pealeana (strain ATCC 700345 / ANG-SQ1).